Reading from the N-terminus, the 375-residue chain is 23S rRNA (uracil(747)-C(5))-methyltransferase RlmC (375 aa).

Positions 3, 11, 14, and 87 each coordinate [4Fe-4S] cluster. S-adenosyl-L-methionine contacts are provided by Gln-212, Phe-241, Glu-262, and Asn-307. Residue Cys-334 is the Nucleophile of the active site.

It belongs to the class I-like SAM-binding methyltransferase superfamily. RNA M5U methyltransferase family. RlmC subfamily.

It catalyses the reaction uridine(747) in 23S rRNA + S-adenosyl-L-methionine = 5-methyluridine(747) in 23S rRNA + S-adenosyl-L-homocysteine + H(+). Functionally, catalyzes the formation of 5-methyl-uridine at position 747 (m5U747) in 23S rRNA. In Shigella flexneri serotype 5b (strain 8401), this protein is 23S rRNA (uracil(747)-C(5))-methyltransferase RlmC.